Consider the following 254-residue polypeptide: Isoprenyl transferase (254 aa).

Residue Asp12 is part of the active site. Asp12 contributes to the Mg(2+) binding site. Substrate is bound by residues 13–16 (GNGR), Trp17, Arg25, His29, and 57–59 (SSE). Residue Asn60 is the Proton acceptor of the active site. Substrate is bound by residues Trp61, Arg63, Arg180, and 186–188 (RLS). Glu199 contributes to the Mg(2+) binding site.

This sequence belongs to the UPP synthase family. In terms of assembly, homodimer. It depends on Mg(2+) as a cofactor.

Its function is as follows. Catalyzes the condensation of isopentenyl diphosphate (IPP) with allylic pyrophosphates generating different type of terpenoids. This Brucella suis biovar 1 (strain 1330) protein is Isoprenyl transferase.